Consider the following 42-residue polypeptide: Photosystem II reaction center protein J (42 aa).

The chain crosses the membrane as a helical span at residues 10 to 30 (IPLWLVATVAGLAVIALLGVF).

It belongs to the PsbJ family. In terms of assembly, PSII is composed of 1 copy each of membrane proteins PsbA, PsbB, PsbC, PsbD, PsbE, PsbF, PsbH, PsbI, PsbJ, PsbK, PsbL, PsbM, PsbT, PsbX, PsbY, PsbZ, Psb30/Ycf12, at least 3 peripheral proteins of the oxygen-evolving complex and a large number of cofactors. It forms dimeric complexes.

Its subcellular location is the plastid. The protein resides in the chloroplast thylakoid membrane. Its function is as follows. One of the components of the core complex of photosystem II (PSII). PSII is a light-driven water:plastoquinone oxidoreductase that uses light energy to abstract electrons from H(2)O, generating O(2) and a proton gradient subsequently used for ATP formation. It consists of a core antenna complex that captures photons, and an electron transfer chain that converts photonic excitation into a charge separation. The sequence is that of Photosystem II reaction center protein J from Chlorokybus atmophyticus (Soil alga).